Consider the following 237-residue polypeptide: Phosphoribosylaminoimidazole-succinocarboxamide synthase (237 aa).

This sequence belongs to the SAICAR synthetase family.

The catalysed reaction is 5-amino-1-(5-phospho-D-ribosyl)imidazole-4-carboxylate + L-aspartate + ATP = (2S)-2-[5-amino-1-(5-phospho-beta-D-ribosyl)imidazole-4-carboxamido]succinate + ADP + phosphate + 2 H(+). Its pathway is purine metabolism; IMP biosynthesis via de novo pathway; 5-amino-1-(5-phospho-D-ribosyl)imidazole-4-carboxamide from 5-amino-1-(5-phospho-D-ribosyl)imidazole-4-carboxylate: step 1/2. In Deinococcus deserti (strain DSM 17065 / CIP 109153 / LMG 22923 / VCD115), this protein is Phosphoribosylaminoimidazole-succinocarboxamide synthase.